Here is a 429-residue protein sequence, read N- to C-terminus: UDP-N-acetylglucosamine 1-carboxyvinyltransferase (429 aa).

22 to 23 (KN) lines the phosphoenolpyruvate pocket. Residue R102 participates in UDP-N-acetyl-alpha-D-glucosamine binding. C126 acts as the Proton donor in catalysis. At C126 the chain carries 2-(S-cysteinyl)pyruvic acid O-phosphothioketal. UDP-N-acetyl-alpha-D-glucosamine contacts are provided by residues 131–135 (RPVDL), D316, and I338.

The protein belongs to the EPSP synthase family. MurA subfamily.

It localises to the cytoplasm. The enzyme catalyses phosphoenolpyruvate + UDP-N-acetyl-alpha-D-glucosamine = UDP-N-acetyl-3-O-(1-carboxyvinyl)-alpha-D-glucosamine + phosphate. Its pathway is cell wall biogenesis; peptidoglycan biosynthesis. Its function is as follows. Cell wall formation. Adds enolpyruvyl to UDP-N-acetylglucosamine. This Methylorubrum extorquens (strain CM4 / NCIMB 13688) (Methylobacterium extorquens) protein is UDP-N-acetylglucosamine 1-carboxyvinyltransferase.